The sequence spans 347 residues: 4-hydroxy-tetrahydrodipicolinate reductase 1, chloroplastic (347 aa).

Residues 1-51 (MATNGLMASSSVFLHRPRIAFASRTNQTVGKYGKGRVSFMGIGTRRLPVVL) constitute a chloroplast transit peptide. N-acetylserine is present on S52. NAD(+) contacts are provided by residues 79 to 84 (GCSGKM), 171 to 173 (GTT), and 194 to 197 (SPQM). The active-site Proton donor/acceptor is H230. K234 acts as the Proton donor in catalysis. 239 to 240 (GT) lines the (S)-2,3,4,5-tetrahydrodipicolinate pocket.

It belongs to the DapB family.

Its subcellular location is the plastid. The protein localises to the chloroplast. The catalysed reaction is (S)-2,3,4,5-tetrahydrodipicolinate + NAD(+) + H2O = (2S,4S)-4-hydroxy-2,3,4,5-tetrahydrodipicolinate + NADH + H(+). It catalyses the reaction (S)-2,3,4,5-tetrahydrodipicolinate + NADP(+) + H2O = (2S,4S)-4-hydroxy-2,3,4,5-tetrahydrodipicolinate + NADPH + H(+). It functions in the pathway amino-acid biosynthesis; L-lysine biosynthesis via DAP pathway; (S)-tetrahydrodipicolinate from L-aspartate: step 4/4. In terms of biological role, catalyzes the conversion of 4-hydroxy-tetrahydrodipicolinate (HTPA) to tetrahydrodipicolinate. This Arabidopsis thaliana (Mouse-ear cress) protein is 4-hydroxy-tetrahydrodipicolinate reductase 1, chloroplastic (DAPB1).